Consider the following 332-residue polypeptide: tRNA-dihydrouridine(20/20a) synthase (332 aa).

Residues 19–21 and Gln71 each bind FMN; that span reads PML. Cys101 serves as the catalytic Proton donor. Residues Lys140, His173, 213–215, and 235–236 contribute to the FMN site; these read NGG and GR.

This sequence belongs to the Dus family. DusA subfamily. It depends on FMN as a cofactor.

The enzyme catalyses 5,6-dihydrouridine(20) in tRNA + NADP(+) = uridine(20) in tRNA + NADPH + H(+). It catalyses the reaction 5,6-dihydrouridine(20) in tRNA + NAD(+) = uridine(20) in tRNA + NADH + H(+). It carries out the reaction 5,6-dihydrouridine(20a) in tRNA + NADP(+) = uridine(20a) in tRNA + NADPH + H(+). The catalysed reaction is 5,6-dihydrouridine(20a) in tRNA + NAD(+) = uridine(20a) in tRNA + NADH + H(+). Catalyzes the synthesis of 5,6-dihydrouridine (D), a modified base found in the D-loop of most tRNAs, via the reduction of the C5-C6 double bond in target uridines. Specifically modifies U20 and U20a in tRNAs. The protein is tRNA-dihydrouridine(20/20a) synthase of Salmonella typhimurium (strain LT2 / SGSC1412 / ATCC 700720).